A 200-amino-acid polypeptide reads, in one-letter code: Charged multivesicular body protein 6 (200 aa).

A lipid anchor (N-myristoyl glycine) is attached at glycine 2. A coiled-coil region spans residues 10–94; the sequence is RSRVTEQDKA…ERMVQDIEFT (85 aa). The Type-2 MIT-interacting motif motif lies at 168–179; sequence LELPDVPSEPLP. The disordered stretch occupies residues 169–200; it reads ELPDVPSEPLPEEPPEATPVKNRPKPELVAAS.

It belongs to the SNF7 family. Probable core component of the endosomal sorting required for transport complex III (ESCRT-III). ESCRT-III components are thought to multimerize to form a flat lattice on the perimeter membrane of the endosome.

The protein localises to the endomembrane system. Its subcellular location is the late endosome membrane. Functionally, probable core component of the endosomal sorting required for transport complex III (ESCRT-III) which is involved in multivesicular bodies (MVBs) formation and sorting of endosomal cargo proteins into MVBs. MVBs contain intraluminal vesicles (ILVs) that are generated by invagination and scission from the limiting membrane of the endosome and mostly are delivered to lysosomes enabling degradation of membrane proteins, such as stimulated growth factor receptors, lysosomal enzymes and lipids. In the ESCRT-III complex, it probably serves as an acceptor for the ESCRT-II complex on endosomal membranes. This chain is Charged multivesicular body protein 6 (CHMP6), found in Gallus gallus (Chicken).